Consider the following 431-residue polypeptide: Probable indole-3-pyruvate monooxygenase YUCCA7 (431 aa).

Residue 36-41 (GAGPSG) participates in FAD binding. 207–212 (GCGNSG) contributes to the NADP(+) binding site.

It belongs to the FMO family. It depends on FAD as a cofactor. Expressed in shoot apex regions and siliques, and at high levels in roots. Detected in flowers, stems and leaves.

It catalyses the reaction indole-3-pyruvate + NADPH + O2 + H(+) = (indol-3-yl)acetate + CO2 + NADP(+) + H2O. Its pathway is plant hormone metabolism; auxin biosynthesis. Its function is as follows. Involved in auxin biosynthesis. Belongs to the set of redundant YUCCA genes probably responsible for auxin biosynthesis in roots. The sequence is that of Probable indole-3-pyruvate monooxygenase YUCCA7 (YUC7) from Arabidopsis thaliana (Mouse-ear cress).